The sequence spans 1324 residues: DNA-directed RNA polymerase subunit beta' (1324 aa).

Zn(2+)-binding residues include C219, C292, C299, and C302. Residues 1293 to 1324 (ARDFEFASSDVEEDELTEEDDDYGDEEEEDAF) form a disordered region. The span at 1302–1324 (DVEEDELTEEDDDYGDEEEEDAF) shows a compositional bias: acidic residues.

This sequence belongs to the RNA polymerase beta' chain family. RpoC2 subfamily. In terms of assembly, in cyanobacteria the RNAP catalytic core is composed of 2 alpha, 1 beta, 1 beta', 1 gamma and 1 omega subunit. When a sigma factor is associated with the core the holoenzyme is formed, which can initiate transcription. It depends on Zn(2+) as a cofactor.

It carries out the reaction RNA(n) + a ribonucleoside 5'-triphosphate = RNA(n+1) + diphosphate. In terms of biological role, DNA-dependent RNA polymerase catalyzes the transcription of DNA into RNA using the four ribonucleoside triphosphates as substrates. This chain is DNA-directed RNA polymerase subunit beta', found in Thermosynechococcus vestitus (strain NIES-2133 / IAM M-273 / BP-1).